The primary structure comprises 458 residues: Brassinosteroid-related acyltransferase 1 (458 aa).

H164 serves as the catalytic Proton acceptor.

The protein belongs to the plant acyltransferase family. As to expression, highly expressed in young tissues and vascular bundles. Mostly expressed in young leaves, primary roots, flowers (including petals and sepals), and siliques.

Its subcellular location is the endoplasmic reticulum. The protein resides in the nucleus. The protein operates within plant hormone biosynthesis; brassinosteroid biosynthesis. Brassinosteroids (BR) acyltransferase with acyl-CoA ligase activity toward brassinolide (BL), castasterone (CS), typhasterol (TY), 6-deoxotyphasterol (6-deoxoTY), and 6-deoxocastasterone (6-deoxoCS) and thus converts them to corresponding lauroyl esters. Regulates BR homeostasis and promotes BR-mediated cell growth regulation. Involved in vascular bundle development. This is Brassinosteroid-related acyltransferase 1 from Arabidopsis thaliana (Mouse-ear cress).